A 400-amino-acid chain; its full sequence is Snake venom metalloproteinase H1 (400 aa).

The first 6 residues, 1-6 (FPYQGS), serve as a signal peptide directing secretion. The propeptide occupies 7 to 176 (SIILESGNVN…KKASQLIVST (170 aa)). The Peptidase M12B domain maps to 180 to 377 (RYMEIVIVVD…ENPPCILNKP (198 aa)). Residues E183 and D267 each contribute to the Ca(2+) site. Intrachain disulfides connect C291–C372, C331–C356, and C333–C339. H316 lines the Zn(2+) pocket. E317 is a catalytic residue. Positions 320 and 326 each coordinate Zn(2+). Residues C372, N375, V387, N390, L392, E394, and D400 each contribute to the Ca(2+) site. A propeptide spanning residues 378–400 (LRTDTVSTPVSGNELLEAGKDYD) is cleaved from the precursor.

The protein belongs to the venom metalloproteinase (M12B) family. P-I subfamily. In terms of assembly, monomer. It depends on Zn(2+) as a cofactor. In terms of tissue distribution, expressed by the venom gland.

It is found in the secreted. Functionally, snake venom metalloproteinase that impairs hemostasis in the envenomed animal. In Deinagkistrodon acutus (Hundred-pace snake), this protein is Snake venom metalloproteinase H1.